A 163-amino-acid polypeptide reads, in one-letter code: ATP synthase subunit b 2 (163 aa).

A helical transmembrane segment spans residues 5-25 (SLATLWATIALIIFLGVAIYI).

Belongs to the ATPase B chain family. In terms of assembly, F-type ATPases have 2 components, F(1) - the catalytic core - and F(0) - the membrane proton channel. F(1) has five subunits: alpha(3), beta(3), gamma(1), delta(1), epsilon(1). F(0) has three main subunits: a(1), b(2) and c(10-14). The alpha and beta chains form an alternating ring which encloses part of the gamma chain. F(1) is attached to F(0) by a central stalk formed by the gamma and epsilon chains, while a peripheral stalk is formed by the delta and b chains.

The protein localises to the cell inner membrane. Its function is as follows. F(1)F(0) ATP synthase produces ATP from ADP in the presence of a proton or sodium gradient. F-type ATPases consist of two structural domains, F(1) containing the extramembraneous catalytic core and F(0) containing the membrane proton channel, linked together by a central stalk and a peripheral stalk. During catalysis, ATP synthesis in the catalytic domain of F(1) is coupled via a rotary mechanism of the central stalk subunits to proton translocation. Functionally, component of the F(0) channel, it forms part of the peripheral stalk, linking F(1) to F(0). This Mesorhizobium japonicum (strain LMG 29417 / CECT 9101 / MAFF 303099) (Mesorhizobium loti (strain MAFF 303099)) protein is ATP synthase subunit b 2.